The chain runs to 447 residues: Tubulin beta chain (447 aa).

Gln-11, Glu-69, Ser-138, Gly-142, Thr-143, Gly-144, Asn-204, and Asn-226 together coordinate GTP. Position 69 (Glu-69) interacts with Mg(2+). The segment at 424–447 (QYQDAGVDEEEEEYEEEAPLEGEE) is disordered. The segment covering 429-447 (GVDEEEEEYEEEAPLEGEE) has biased composition (acidic residues).

It belongs to the tubulin family. Dimer of alpha and beta chains. A typical microtubule is a hollow water-filled tube with an outer diameter of 25 nm and an inner diameter of 15 nM. Alpha-beta heterodimers associate head-to-tail to form protofilaments running lengthwise along the microtubule wall with the beta-tubulin subunit facing the microtubule plus end conferring a structural polarity. Microtubules usually have 13 protofilaments but different protofilament numbers can be found in some organisms and specialized cells. It depends on Mg(2+) as a cofactor.

Its subcellular location is the cytoplasm. The protein localises to the cytoskeleton. In terms of biological role, tubulin is the major constituent of microtubules, a cylinder consisting of laterally associated linear protofilaments composed of alpha- and beta-tubulin heterodimers. Microtubules grow by the addition of GTP-tubulin dimers to the microtubule end, where a stabilizing cap forms. Below the cap, tubulin dimers are in GDP-bound state, owing to GTPase activity of alpha-tubulin. This is Tubulin beta chain (tub-2) from Neurospora crassa (strain ATCC 24698 / 74-OR23-1A / CBS 708.71 / DSM 1257 / FGSC 987).